We begin with the raw amino-acid sequence, 163 residues long: Putative 4-hydroxy-4-methyl-2-oxoglutarate aldolase (163 aa).

Residues 76-79 (GDMI) and Arg98 contribute to the substrate site. Asp99 contacts a divalent metal cation.

This sequence belongs to the class II aldolase/RraA-like family. Homotrimer. A divalent metal cation is required as a cofactor.

It catalyses the reaction 4-hydroxy-4-methyl-2-oxoglutarate = 2 pyruvate. The catalysed reaction is oxaloacetate + H(+) = pyruvate + CO2. In terms of biological role, catalyzes the aldol cleavage of 4-hydroxy-4-methyl-2-oxoglutarate (HMG) into 2 molecules of pyruvate. Also contains a secondary oxaloacetate (OAA) decarboxylase activity due to the common pyruvate enolate transition state formed following C-C bond cleavage in the retro-aldol and decarboxylation reactions. In Pseudomonas fluorescens, this protein is Putative 4-hydroxy-4-methyl-2-oxoglutarate aldolase.